Here is a 742-residue protein sequence, read N- to C-terminus: Synaptic vesicle glycoprotein 2A (742 aa).

The tract at residues methionine 1–aspartate 57 is interaction with SYT1. The Cytoplasmic portion of the chain corresponds to methionine 1–tyrosine 169. The span at glutamate 40 to phenylalanine 49 shows a compositional bias: basic and acidic residues. Positions glutamate 40–arginine 145 are disordered. 2 positions are modified to phosphoserine: serine 80 and serine 81. A Phosphothreonine modification is found at threonine 84. The span at valine 122–glycine 137 shows a compositional bias: gly residues. Position 127 is a phosphoserine (serine 127). The helical transmembrane segment at phenylalanine 170–leucine 190 threads the bilayer. The Extracellular segment spans residues proline 191–glycine 205. A helical transmembrane segment spans residues methionine 206–alanine 226. At aspartate 227–glutamine 233 the chain is on the cytoplasmic side. Residues cysteine 234–glycine 254 traverse the membrane as a helical segment. The Extracellular segment spans residues tyrosine 255–arginine 262. A helical membrane pass occupies residues leucine 263–phenylalanine 283. At leucine 284 to serine 294 the chain is on the cytoplasmic side. A helical transmembrane segment spans residues tryptophan 295 to isoleucine 315. The Extracellular portion of the chain corresponds to proline 316–arginine 334. A helical membrane pass occupies residues valine 335–proline 355. Residues glutamate 356–threonine 447 lie on the Cytoplasmic side of the membrane. Serine 393 carries the phosphoserine modification. Residues leucine 448–phenylalanine 468 traverse the membrane as a helical segment. The Extracellular portion of the chain corresponds to proline 469–tyrosine 598. Tyrosine 480 bears the Phosphotyrosine mark. 3 N-linked (GlcNAc...) asparagine glycosylation sites follow: asparagine 498, asparagine 548, and asparagine 573. The chain crosses the membrane as a helical span at residues phenylalanine 599–methionine 619. The Cytoplasmic segment spans residues aspartate 620–arginine 626. The chain crosses the membrane as a helical span at residues methionine 627–serine 647. Topologically, residues glutamate 648–methionine 651 are extracellular. A helical membrane pass occupies residues isoleucine 652–leucine 672. Topologically, residues threonine 673–alanine 685 are cytoplasmic. The chain crosses the membrane as a helical span at residues phenylalanine 686–valine 708. Residues glycine 709 to lysine 712 lie on the Extracellular side of the membrane. The helical transmembrane segment at alanine 713–leucine 731 threads the bilayer. The Cytoplasmic segment spans residues lysine 732–glutamine 742.

It belongs to the major facilitator superfamily. Interacts with SYT1/synaptotagmin-1 in a calcium-dependent manner. Binds the adapter protein complex AP-2. In terms of assembly, (Microbial infection) Interacts with C.botulinum neurotoxin type A (BoNT/A, botA). Phosphorylation by CK1 of the N-terminal cytoplasmic domain regulates interaction with SYT1. Post-translationally, N-glycosylated. Expressed in conventional synapses and cone ribbon synapses in the retina (at protein level). Expressed in diaphragm motor nerve terminals (at protein level). Expressed in hippocampus neurons (at protein level).

It is found in the presynapse. The protein resides in the cytoplasmic vesicle. Its subcellular location is the secretory vesicle. It localises to the synaptic vesicle membrane. Its function is as follows. Plays a role in the control of regulated secretion in neural and endocrine cells, enhancing selectively low-frequency neurotransmission. Positively regulates vesicle fusion by maintaining the readily releasable pool of secretory vesicles. Functionally, (Microbial infection) Receptor for C.botulinum neurotoxin type A (BoNT/A, botA); the toxin probably binds via extracellular loop 4. (Microbial infection) Possible receptor for C.botulinum neurotoxin type D (BoNT/D, botD); BoNT/D does not bind to extracellular loop 4 as do BoNT/A and BoNT/E. In terms of biological role, (Microbial infection) Receptor for C.botulinum neurotoxin type E (BoNT/E); the toxin probably binds via extracellular loop 4. It probably requires glycosylation of Asn-573. This is Synaptic vesicle glycoprotein 2A (Sv2a) from Mus musculus (Mouse).